The sequence spans 805 residues: Probable phosphoketolase (805 aa).

The protein belongs to the XFP family. The cofactor is thiamine diphosphate.

In Synechocystis sp. (strain ATCC 27184 / PCC 6803 / Kazusa), this protein is Probable phosphoketolase.